A 202-amino-acid polypeptide reads, in one-letter code: uncharacterized protein (202 aa).

Transmembrane regions (helical) follow at residues 34–54 (AAYV…QARI), 102–122 (MGVA…PLVI), and 125–145 (ILPL…FNKA). A disordered region spans residues 165–202 (NKPAAAVTGTSSNSNNASAKSDGPTITELNENETEKSS). A compositionally biased stretch (low complexity) spans 168-185 (AAAVTGTSSNSNNASAKS). A phosphoserine mark is found at serine 185 and serine 201.

Belongs to the PHO88 family.

The protein localises to the endoplasmic reticulum membrane. This is an uncharacterized protein from Schizosaccharomyces pombe (strain 972 / ATCC 24843) (Fission yeast).